The following is a 226-amino-acid chain: Guanylate kinase (226 aa).

Residues 13 to 193 enclose the Guanylate kinase-like domain; that stretch reads GLLLVLSAPS…ALAQLQAIVR (181 aa). 20 to 27 provides a ligand contact to ATP; sequence APSGAGKT.

The protein belongs to the guanylate kinase family.

It is found in the cytoplasm. The catalysed reaction is GMP + ATP = GDP + ADP. Its function is as follows. Essential for recycling GMP and indirectly, cGMP. The chain is Guanylate kinase from Anaeromyxobacter dehalogenans (strain 2CP-C).